Consider the following 704-residue polypeptide: Capsule polysaccharide modification protein LipA (704 aa).

It localises to the cell inner membrane. Its function is as follows. Involved in the phospholipid modification of the capsular polysaccharide, a strong requirement for its translocation to the cell surface. This chain is Capsule polysaccharide modification protein LipA (lipA), found in Neisseria meningitidis serogroup B (strain ATCC BAA-335 / MC58).